The sequence spans 515 residues: Gamma aminobutyrate transaminase 1, mitochondrial (515 aa).

A mitochondrion-targeting transit peptide spans 1–57; sequence MAKISRLFGSTVKAAITAQAGFHGKRIPAVSSLQEHIVKSTPARYNSTQACLENDIS. 172 to 173 provides a ligand contact to pyridoxal 5'-phosphate; that stretch reads GS. Substrate is bound at residue Tyr205. Asp312 is a pyridoxal 5'-phosphate binding site. Lys341 is a substrate binding site. Position 341 is an N6-(pyridoxal phosphate)lysine (Lys341).

It belongs to the class-III pyridoxal-phosphate-dependent aminotransferase family. In terms of tissue distribution, expressed in leaves, roots, stems, flowers and fruits.

It is found in the mitochondrion. The enzyme catalyses 4-aminobutanoate + pyruvate = succinate semialdehyde + L-alanine. The catalysed reaction is 4-aminobutanoate + glyoxylate = succinate semialdehyde + glycine. Its function is as follows. Transaminase that degrades gamma-amino butyric acid (GABA) and uses pyruvate or glyoxylate as amino-group acceptor. Cannot use beta-alanine, ornithine, acetylornithine, serine, glycine, asparagine, glutamine, glutamate, valine, leucine, isoleucine, methionine, phenylalanine, histidine, lysine, arginine, aspartate, threonine, tyrosine, tryptophan, proline, or cysteine as amino donors. Acts predominantly in vegetative tissues. In Solanum lycopersicum (Tomato), this protein is Gamma aminobutyrate transaminase 1, mitochondrial (GABA-TP1).